The following is a 650-amino-acid chain: Chaperone protein DnaK (650 aa).

Threonine 200 bears the Phosphothreonine; by autocatalysis mark. Residues alanine 611–glutamine 634 are compositionally biased toward low complexity. The interval alanine 611 to aspartate 650 is disordered.

Belongs to the heat shock protein 70 family.

Acts as a chaperone. This is Chaperone protein DnaK from Burkholderia pseudomallei (strain 1710b).